The sequence spans 29 residues: Trypsin inhibitor 1 (29 aa).

3 disulfide bridges follow: Cys-3-Cys-20, Cys-10-Cys-22, and Cys-16-Cys-28.

Belongs to the protease inhibitor I7 (squash-type serine protease inhibitor) family.

The protein localises to the secreted. Inhibits trypsin. The polypeptide is Trypsin inhibitor 1 (Luffa aegyptiaca (Sponge gourd)).